Reading from the N-terminus, the 261-residue chain is Uridine-cytidine kinase 2 (261 aa).

Polar residues predominate over residues 1–16 (MAGDSEQTLQNHQQPN). The tract at residues 1–24 (MAGDSEQTLQNHQQPNGGEPFLIG) is disordered. Ala2 carries the N-acetylalanine modification. 27-35 (GGTASGKSS) contributes to the ATP binding site. Residues Asp84, Tyr112, His117, Arg166, Arg176, and Gln184 each contribute to the substrate site. An ATP-binding site is contributed by Asp213. Residues 240–261 (GYLNGYTPSRKRQASESSSRPH) are disordered. Ser254 is subject to Phosphoserine.

It belongs to the uridine kinase family. As to quaternary structure, homotetramer.

It carries out the reaction uridine + ATP = UMP + ADP + H(+). The enzyme catalyses cytidine + ATP = CMP + ADP + H(+). The protein operates within pyrimidine metabolism; CTP biosynthesis via salvage pathway; CTP from cytidine: step 1/3. Its pathway is pyrimidine metabolism; UMP biosynthesis via salvage pathway; UMP from uridine: step 1/1. In terms of biological role, phosphorylates uridine and cytidine to uridine monophosphate and cytidine monophosphate. Does not phosphorylate deoxyribonucleosides or purine ribonucleosides. Can use ATP or GTP as a phosphate donor. In Mus musculus (Mouse), this protein is Uridine-cytidine kinase 2 (Uck2).